We begin with the raw amino-acid sequence, 206 residues long: Dephospho-CoA kinase (206 aa).

The region spanning 4–200 is the DPCK domain; the sequence is IVALTGGIGS…HRYLKLATAA (197 aa). Residue 12-17 coordinates ATP; the sequence is GSGKST.

It belongs to the CoaE family.

It is found in the cytoplasm. The enzyme catalyses 3'-dephospho-CoA + ATP = ADP + CoA + H(+). It participates in cofactor biosynthesis; coenzyme A biosynthesis; CoA from (R)-pantothenate: step 5/5. Functionally, catalyzes the phosphorylation of the 3'-hydroxyl group of dephosphocoenzyme A to form coenzyme A. This chain is Dephospho-CoA kinase, found in Yersinia pestis.